The chain runs to 151 residues: MKLILTAEVEHLGVPGDAVEVKDGYGRNYLLPRGLAIVATRGAQRQADDIRRAQELKSVKGLEHANELKQAIEGLESVELAVKTAADSGKLFGSVTAADVVAAIKKAGGPNLDKRTIGLPKAHIKTTGAHDIAVRLHPEVTAALSLNVVAG.

It belongs to the bacterial ribosomal protein bL9 family.

Binds to the 23S rRNA. The polypeptide is Large ribosomal subunit protein bL9 (Mycolicibacterium vanbaalenii (strain DSM 7251 / JCM 13017 / BCRC 16820 / KCTC 9966 / NRRL B-24157 / PYR-1) (Mycobacterium vanbaalenii)).